Here is a 257-residue protein sequence, read N- to C-terminus: Cytochrome b561 domain-containing protein At2g30890 (257 aa).

The N-terminal stretch at 1 to 21 is a signal peptide; the sequence is MEIHHQLLVSLLFLLLPLCSS. One can recognise a Cytochrome b561 domain in the interval 22–219; the sequence is QENTRSLAID…LFQDKWSYIQ (198 aa). The next 5 helical transmembrane spans lie at 55–75, 91–111, 125–145, 157–177, and 191–211; these read VHGF…IISI, LFFL…IGAV, HQQL…LGFL, WFVG…INIY, and ANLW…VYLF. H56, H95, H125, and H161 together coordinate heme b. Residues 235–257 form a disordered region; it reads NISTAETGHGYEVEESKPELEKC. Residues 243 to 257 show a composition bias toward basic and acidic residues; sequence HGYEVEESKPELEKC.

The cofactor is heme b.

It is found in the membrane. The sequence is that of Cytochrome b561 domain-containing protein At2g30890 from Arabidopsis thaliana (Mouse-ear cress).